We begin with the raw amino-acid sequence, 122 residues long: Large ribosomal subunit protein uL14 (122 aa).

This sequence belongs to the universal ribosomal protein uL14 family. As to quaternary structure, part of the 50S ribosomal subunit. Forms a cluster with proteins L3 and L19. In the 70S ribosome, L14 and L19 interact and together make contacts with the 16S rRNA in bridges B5 and B8.

Its function is as follows. Binds to 23S rRNA. Forms part of two intersubunit bridges in the 70S ribosome. This chain is Large ribosomal subunit protein uL14, found in Streptococcus thermophilus (strain CNRZ 1066).